A 222-amino-acid chain; its full sequence is Peptide methionine sulfoxide reductase MsrA (222 aa).

Residue Cys54 is part of the active site.

The protein belongs to the MsrA Met sulfoxide reductase family.

The enzyme catalyses L-methionyl-[protein] + [thioredoxin]-disulfide + H2O = L-methionyl-(S)-S-oxide-[protein] + [thioredoxin]-dithiol. It carries out the reaction [thioredoxin]-disulfide + L-methionine + H2O = L-methionine (S)-S-oxide + [thioredoxin]-dithiol. Functionally, has an important function as a repair enzyme for proteins that have been inactivated by oxidation. Catalyzes the reversible oxidation-reduction of methionine sulfoxide in proteins to methionine. In Methylococcus capsulatus (strain ATCC 33009 / NCIMB 11132 / Bath), this protein is Peptide methionine sulfoxide reductase MsrA.